The following is a 172-amino-acid chain: NADH-quinone oxidoreductase subunit B (172 aa).

[4Fe-4S] cluster is bound by residues Cys-46, Cys-47, Cys-111, and Cys-141.

This sequence belongs to the complex I 20 kDa subunit family. In terms of assembly, NDH-1 is composed of 14 different subunits. Subunits NuoB, C, D, E, F, and G constitute the peripheral sector of the complex. The cofactor is [4Fe-4S] cluster.

Its subcellular location is the cell membrane. It carries out the reaction a quinone + NADH + 5 H(+)(in) = a quinol + NAD(+) + 4 H(+)(out). Its function is as follows. NDH-1 shuttles electrons from NADH, via FMN and iron-sulfur (Fe-S) centers, to quinones in the respiratory chain. The immediate electron acceptor for the enzyme in this species is believed to be a menaquinone. Couples the redox reaction to proton translocation (for every two electrons transferred, four hydrogen ions are translocated across the cytoplasmic membrane), and thus conserves the redox energy in a proton gradient. The polypeptide is NADH-quinone oxidoreductase subunit B (Bacillus cytotoxicus (strain DSM 22905 / CIP 110041 / 391-98 / NVH 391-98)).